A 440-amino-acid polypeptide reads, in one-letter code: Chromosomal replication initiator protein DnaA (440 aa).

The segment at 1-69 (MKERILQEIK…VKVVLGNDAT (69 aa)) is domain I, interacts with DnaA modulators. The tract at residues 69-96 (TFEITYEAFEPHSSYSEPLVKKRAVLLT) is domain II. A domain III, AAA+ region region spans residues 97–313 (PLNPDYTFEN…GAIIKLLVYK (217 aa)). Residues Gly140, Gly142, Lys143, and Thr144 each coordinate ATP. Positions 314 to 440 (ETTGKEVDLK…GEISRRALSG (127 aa)) are domain IV, binds dsDNA.

It belongs to the DnaA family. Oligomerizes as a right-handed, spiral filament on DNA at oriC.

The protein localises to the cytoplasm. Functionally, plays an essential role in the initiation and regulation of chromosomal replication. ATP-DnaA binds to the origin of replication (oriC) to initiate formation of the DNA replication initiation complex once per cell cycle. Binds the DnaA box (a 9 base pair repeat at the origin) and separates the double-stranded (ds)DNA. Forms a right-handed helical filament on oriC DNA; dsDNA binds to the exterior of the filament while single-stranded (ss)DNA is stabiized in the filament's interior. The ATP-DnaA-oriC complex binds and stabilizes one strand of the AT-rich DNA unwinding element (DUE), permitting loading of DNA polymerase. After initiation quickly degrades to an ADP-DnaA complex that is not apt for DNA replication. Binds acidic phospholipids. This chain is Chromosomal replication initiator protein DnaA, found in Thermotoga sp. (strain RQ2).